The primary structure comprises 405 residues: Deoxyguanosinetriphosphate triphosphohydrolase-like protein (405 aa).

Residues 75–219 (RLTHTIEVAQ…AAIADDIAYN (145 aa)) enclose the HD domain.

Belongs to the dGTPase family. Type 2 subfamily.

The protein is Deoxyguanosinetriphosphate triphosphohydrolase-like protein of Rhizobium johnstonii (strain DSM 114642 / LMG 32736 / 3841) (Rhizobium leguminosarum bv. viciae).